A 1008-amino-acid chain; its full sequence is Phytosulfokine receptor 1 (1008 aa).

The N-terminal stretch at Met1–Ser25 is a signal peptide. N-linked (GlcNAc...) asparagine glycans are attached at residues Asn55, Asn64, and Asn73. 12 LRR repeats span residues Thr75–Lys98, Leu99–Leu123, Lys124–Ala148, Gln150–Asn170, Thr172–Lys194, Cys195–Leu219, Arg221–Leu243, Ser244–Glu266, Ser291–Met315, Ile316–Cys339, Arg341–Asn362, and Phe363–Gln387. N-linked (GlcNAc...) asparagine glycosylation occurs at Asn106. N-linked (GlcNAc...) asparagine glycosylation is found at Asn160, Asn170, and Asn187. The N-linked (GlcNAc...) asparagine glycan is linked to Asn242. Arg300 serves as a coordination point for phytosulfokine. N-linked (GlcNAc...) asparagine glycosylation is found at Asn301 and Asn311. Phytosulfokine contacts are provided by Asn346, Ser370, and Ser372. N-linked (GlcNAc...) asparagine glycosylation is found at Asn373, Asn378, and Asn391. LRR repeat units follow at residues Leu392–Phe414, Glu415–Ser438, Asn439–Ala464, and Phe466–Leu486. Phytosulfokine-binding residues include Thr398, Asn424, and Asp445. Residues Asn472 and Asn493 are each glycosylated (N-linked (GlcNAc...) asparagine). A phytosulfokine-binding site is contributed by Lys508. 2 N-linked (GlcNAc...) asparagine glycosylation sites follow: Asn510 and Asn534. 4 LRR repeats span residues Ile521 to Asn545, Leu546 to Met570, Thr571 to Leu594, and Phe596 to Thr619. Asn606 and Asn622 each carry an N-linked (GlcNAc...) asparagine glycan. Residues Met660 to Leu680 form a helical membrane-spanning segment. Thr731 carries the post-translational modification Phosphothreonine. The region spanning Phe734–Leu1005 is the Protein kinase domain. Residues Ile740 to Val748 and Lys762 contribute to the ATP site. Residues Tyr807 and Tyr847 each carry the phosphotyrosine modification. Asp860 serves as the catalytic Proton acceptor. Tyr902 is subject to Phosphotyrosine.

It belongs to the protein kinase superfamily. Ser/Thr protein kinase family. Homo- and heterodimers with PSY1R. Heterodimers with the somatic embryogenesis receptor-like kinases (SERKs). PSK is not directly involved in PSKR-SERK interaction but stabilizes PSKR island domain for recruitment of a SERK. Part of a functional complex containing PSKR1, BAK1, CNGC17, and AHA. Interacts with AHA1, AHA2, and BAK1, but not with CNGC17 or BRI1. The cofactor is Mg(2+). Requires Mn(2+) as cofactor. Weakly expressed in roots, leaves, stems and flowers. Expressed in the primary and lateral roots, including root primordia and root tips, but not in the hypocotyl.

It localises to the cell membrane. The catalysed reaction is L-seryl-[protein] + ATP = O-phospho-L-seryl-[protein] + ADP + H(+). It carries out the reaction L-threonyl-[protein] + ATP = O-phospho-L-threonyl-[protein] + ADP + H(+). It catalyses the reaction GTP = 3',5'-cyclic GMP + diphosphate. Its activity is regulated as follows. cGMP suppresses kinase activity. In terms of biological role, phytosulfokine receptor with both a serine/threonine-protein kinase activity and a guanylate cyclase activity. Regulates, in response to phytosulfokine binding, a signaling cascade involved in plant cell differentiation, organogenesis, somatic embryogenesis, cellular proliferation and plant growth. Involved in plant immunity, with antagonistic effects on bacterial and fungal resistances. Not involved in PSY perception. CNGC17 and AHAs form a functional cation-translocating unit that is activated by PSKR1/BAK1 and possibly other BAK1/RLK complexes. This Arabidopsis thaliana (Mouse-ear cress) protein is Phytosulfokine receptor 1.